We begin with the raw amino-acid sequence, 764 residues long: Elongation factor G, mitochondrial (764 aa).

The transit peptide at 1–23 (MIRSLRAVSRLGARGFSSFAAAR) directs the protein to the mitochondrion. A tr-type G domain is found at 56–337 (ARMRNIGISA…AICEYLPDPS (282 aa)). Residues 65–72 (AHIDSGKT), 136–140 (DTPGH), and 190–193 (NKMD) contribute to the GTP site.

This sequence belongs to the TRAFAC class translation factor GTPase superfamily. Classic translation factor GTPase family. EF-G/EF-2 subfamily.

The protein resides in the mitochondrion. Its pathway is protein biosynthesis; polypeptide chain elongation. In terms of biological role, mitochondrial GTPase that catalyzes the GTP-dependent ribosomal translocation step during translation elongation. During this step, the ribosome changes from the pre-translocational (PRE) to the post-translocational (POST) state as the newly formed A-site-bound peptidyl-tRNA and P-site-bound deacylated tRNA move to the P and E sites, respectively. Catalyzes the coordinated movement of the two tRNA molecules, the mRNA and conformational changes in the ribosome. This is Elongation factor G, mitochondrial from Yarrowia lipolytica (strain CLIB 122 / E 150) (Yeast).